Reading from the N-terminus, the 624-residue chain is MTQAEKGDAENGKEKGGEKEKEQRGVKRPIVPALVPESLQEQIQSNFIVVIHPGSTTLRLGRATDTLPVSVPHVIARRHKQQGQPLYKDNWLLREGLNKPESNEQRQNGLKMVDQAIWSKKMSNGTRRIPVSPEQTRSYNKQMRPAILDHCSGNKWTNTSQQPEYLVGEEALYVNPLDCYNIHWPIRRGQLNIHPGPGGSLTAVLADIEVIWSHAIQKYLEIPLKDLKYYRCILLIPDIYNKQHVKELVHMILMKMGFAGIVVHQESVCATFGSGLSSTCVVDVGDQKTSVCCVEDGVSHRNTRLCLAYGGSDVSRCFYWLMQRAGFPYRECQLTNKMDCLLLQHLKETFCHLDQDISGLQDHEFQIRHPDSPALLYQFRLGDEKLQAPMALFYPATFGIVGQKMTTLQHRSQGDPEDPHDEHYLLATQSKQEQSAKATADRKSASKPIGFEGDLRGQSSDLPERLHSQEVDLASSQGDCLMAGNESEEALTALMSRKTAISLFEGKALGLDKAILHSVDCCSSDDTKKKMYSSILVVGGGLMFHKAQEFLQHRILNKMPPSFRRIIENVDVITRPKDMDPRLIAWKGGAVLACLDTTQELWIYQREWQRFGVRMLRERAAFVW.

Met-1 is subject to N-acetylmethionine. Residues 1–25 (MTQAEKGDAENGKEKGGEKEKEQRG) are compositionally biased toward basic and acidic residues. A disordered region spans residues 1–29 (MTQAEKGDAENGKEKGGEKEKEQRGVKRP). ATP is bound by residues Ser-55 and Thr-56. A Phosphoserine modification is found at Ser-132. 283–286 (DVGD) contacts ATP. Residue Ser-412 is modified to Phosphoserine. The segment at 430–462 (SKQEQSAKATADRKSASKPIGFEGDLRGQSSDL) is disordered.

The protein belongs to the actin family. ARP8 subfamily. In terms of assembly, component of the chromatin remodeling INO80 complex; specifically part of a complex module associated with the DBINO domain of INO80. Exists as monomers and dimers, but the dimer is most probably the biologically relevant form required for stable interactions with histones that exploits the twofold symmetry of the nucleosome core.

The protein localises to the nucleus. It is found in the chromosome. Its function is as follows. Plays an important role in the functional organization of mitotic chromosomes. Exhibits low basal ATPase activity, and unable to polymerize. Functionally, proposed core component of the chromatin remodeling INO80 complex which is involved in transcriptional regulation, DNA replication and probably DNA repair. Required for the recruitment of INO80 (and probably the INO80 complex) to sites of DNA damage Strongly prefer nucleosomes and H3-H4 tetramers over H2A-H2B dimers, suggesting it may act as a nucleosome recognition module within the complex. This chain is Actin-related protein 8 (Actr8), found in Mus musculus (Mouse).